Here is a 386-residue protein sequence, read N- to C-terminus: Tetratricopeptide repeat protein 4 (386 aa).

Met1 carries the post-translational modification N-acetylmethionine. Phosphoserine is present on Ser51. 3 TPR repeats span residues Ala79–Asp112, Ala117–His150, and Leu151–Glu184. Ser244 carries the phosphoserine modification.

It belongs to the TTC4 family. In terms of assembly, interacts (via TPR repeats) with HSP90AB1. Interacts with HSPA8, CDC6 and TBK1. Interacts with isoform 1 and isoform 3 of MSL1. In terms of tissue distribution, expressed at high levels in the heart, testis, kidney, brain and tongue. Expressed at low levels in the stomach, lung and liver.

Its subcellular location is the nucleus. The protein resides in the nucleoplasm. The protein localises to the cytoplasm. Functionally, may act as a co-chaperone for HSP90AB1. In Mus musculus (Mouse), this protein is Tetratricopeptide repeat protein 4 (Ttc4).